We begin with the raw amino-acid sequence, 128 residues long: Protein FAM229A (128 aa).

A disordered region spans residues 1–96 (MQSSPSTLGP…VATDQNPVRP (96 aa)).

Belongs to the FAM229 family.

The chain is Protein FAM229A (Fam229a) from Mus musculus (Mouse).